A 365-amino-acid chain; its full sequence is MAVNTQPIIRLTNVTKSYGEHQVLKNINLDLEAGKFYTLLGPSGCGKTTILRTIAGFTDATSGQVYFDGQVINTLPANQRQVNTVFQDYALFPHMNVAENVAFGLKLHKVPKDEIETRVQKALAMVQLADLGEREISEISGGQQQRVAIARALVMQPKVLLLDEPLSALDAKLRKDMQYELRDLQQRLGITFLFVTHDQEEALAMSDEIFVMNAGEILQGGSPVDIYDEPINHFVANFIGESNIIPGKMLKDFEVEFVGKQFECADAGMQPNEAVEVVLRPEDLDIVAANQGKLVVTVDSQLFRGNYFEIVAYDTDHNEWLVHSTNPAAEGEPIGLTFDPQDIHVMRLNESEAAFDARLEQYEDD.

Residues 9-239 enclose the ABC transporter domain; it reads IRLTNVTKSY…PINHFVANFI (231 aa). 41–48 contributes to the ATP binding site; that stretch reads GPSGCGKT.

This sequence belongs to the ABC transporter superfamily. Spermidine/putrescine importer (TC 3.A.1.11.1) family. The complex is composed of two ATP-binding proteins (PotA), two transmembrane proteins (PotB and PotC) and a solute-binding protein (PotD).

Its subcellular location is the cell membrane. It carries out the reaction ATP + H2O + polyamine-[polyamine-binding protein]Side 1 = ADP + phosphate + polyamineSide 2 + [polyamine-binding protein]Side 1.. Part of the ABC transporter complex PotABCD involved in spermidine/putrescine import. Responsible for energy coupling to the transport system. The sequence is that of Spermidine/putrescine import ATP-binding protein PotA from Lactiplantibacillus plantarum (strain ATCC BAA-793 / NCIMB 8826 / WCFS1) (Lactobacillus plantarum).